Reading from the N-terminus, the 274-residue chain is UPF0173 metal-dependent hydrolase AnaeK_1127 (274 aa).

The protein belongs to the UPF0173 family.

The polypeptide is UPF0173 metal-dependent hydrolase AnaeK_1127 (Anaeromyxobacter sp. (strain K)).